The following is a 528-amino-acid chain: PC4 and SFRS1-interacting protein (528 aa).

The region spanning 7-64 (PGDLIFAKMKGYPHWPARVDEVPDGAVKPPTNKLPIFFFGTHETAFLGPKDIFPYSEN) is the PWWP domain. Lysine 75 is covalently cross-linked (Glycyl lysine isopeptide (Lys-Gly) (interchain with G-Cter in SUMO2)). The segment at 86–347 (NNPKVKFSSQ…VEKKRETSMD (262 aa)) is disordered. Residues 92–106 (FSSQQVSTKQSNASS) show a composition bias toward polar residues. A phosphoserine mark is found at serine 102, serine 105, and serine 106. A compositionally biased stretch (basic and acidic residues) spans 113–135 (KETSVSKEDTDQEEKASNEDVTK). Phosphothreonine is present on residues threonine 115 and threonine 122. Serine 129 bears the Phosphoserine mark. Threonine 141 is subject to Phosphothreonine. A compositionally biased stretch (basic residues) spans 144-153 (AARRGRKRKA). The short motif at 146–156 (RRGRKRKAEKQ) is the Nuclear localization signal element. Serine 176 and serine 205 each carry phosphoserine. The segment covering 212–260 (DEDKSKKKGPEEKPPKKQLKKEEEGQKEEEKPRKEPDKKEGKKEVESKR) has biased composition (basic and acidic residues). Serine 270 carries the post-translational modification Phosphoserine. Threonine 271 bears the Phosphothreonine mark. Phosphoserine occurs at positions 272 and 274. Residues 285–300 (KRKGGRHFQAAHRRNM) show a composition bias toward basic residues. Over residues 303 to 347 (GQHEKEAADRKRKQEEQMETEQQTKDEGKKPEVKKVEKKRETSMD) the composition is skewed to basic and acidic residues. 2 coiled-coil regions span residues 304–332 (QHEK…EGKK) and 369–393 (NRCI…KHTE). The integrase-binding domain (IBD) stretch occupies residues 338–415 (VEKKRETSMD…VSQVIMEKST (78 aa)). A Phosphoserine modification is found at serine 432. Position 435 is a phosphothreonine (threonine 435). At serine 441 the chain carries Phosphoserine. The segment covering 444-471 (EQRQHEEANKTKDQGKKGPNKKLEKEQT) has biased composition (basic and acidic residues). The segment at 444–528 (EQRQHEEANK…VSLKESTLDN (85 aa)) is disordered. The segment covering 472 to 492 (GTKSLNGGSDAQESNHPQHNG) has biased composition (polar residues). Positions 496–528 (EESKDSREAGSKTKTPGEEREAEVSLKESTLDN) are enriched in basic and acidic residues. Arginine 515 carries the post-translational modification Citrulline. Serine 520 is modified (phosphoserine). A Phosphothreonine modification is found at threonine 525.

The protein belongs to the HDGF family. Monomer. Interacts with IFRD1/PC4. Interacts (via IBD domain) with POGZ (via IBM motif) and CDCA7L (via IBM motifs). Interacts (via IBD domain) with KMT2A (via IBM motifs) with a moderate affinity whereas interacts with the KMT2A-MEN1 complex with a greater affinity; MEN1 enhances interaction of KMT2A with PSIP1. Interacts (via IBD domain) with IWS1 (via IBM motif), MED1 (via IBM motif) and DBF4 (via IBM motifs). Citrullinated by PADI4.

The protein resides in the nucleus. In terms of biological role, transcriptional coactivator involved in neuroepithelial stem cell differentiation and neurogenesis. Involved in particular in lens epithelial cell gene regulation and stress responses. May play an important role in lens epithelial to fiber cell terminal differentiation. May play a protective role during stress-induced apoptosis. The protein is PC4 and SFRS1-interacting protein (Psip1) of Rattus norvegicus (Rat).